Here is a 415-residue protein sequence, read N- to C-terminus: Dynein assembly factor with WD repeat domains 1 (415 aa).

8 WD repeats span residues 90–129, 132–172, 175–214, 217–256, 259–298, 301–340, 343–384, and 385–415; these read AHIL…ELHT, GHRN…CFYT, GHTA…EVST, GHFA…KVHV, GHRG…CLAT, GHND…CLCQ, GHKG…QVLE, and GHSD…RIWH.

This sequence belongs to the WD repeat WDR69 family. Expressed in organs bearing motile cilia, including the pronephros, otic vesicles and Kupffer's vesicle.

The protein resides in the cytoplasm. It is found in the cytoskeleton. The protein localises to the flagellum basal body. Its subcellular location is the flagellum axoneme. Its function is as follows. Required for axonemal dynein assembly and ciliary motility in ciliated organs, including Kupffer's vesicle, during embryogenesis. Facilitates the onset of robust cilia motility during development. The protein is Dynein assembly factor with WD repeat domains 1 (daw1) of Danio rerio (Zebrafish).